An 81-amino-acid chain; its full sequence is Small ribosomal subunit protein bS18 (81 aa).

Belongs to the bacterial ribosomal protein bS18 family. As to quaternary structure, part of the 30S ribosomal subunit. Forms a tight heterodimer with protein bS6.

Functionally, binds as a heterodimer with protein bS6 to the central domain of the 16S rRNA, where it helps stabilize the platform of the 30S subunit. The polypeptide is Small ribosomal subunit protein bS18 (Leptospira borgpetersenii serovar Hardjo-bovis (strain JB197)).